Here is a 270-residue protein sequence, read N- to C-terminus: tRNA pseudouridine synthase A (270 aa).

Catalysis depends on Asp-60, which acts as the Nucleophile. Positions 107-111 (FHARF) are RNA binding. Tyr-118 contacts substrate. An interaction with tRNA region spans residues 168–172 (QCQSR).

The protein belongs to the tRNA pseudouridine synthase TruA family. In terms of assembly, homodimer.

It catalyses the reaction uridine(38/39/40) in tRNA = pseudouridine(38/39/40) in tRNA. Functionally, formation of pseudouridine at positions 38, 39 and 40 in the anticodon stem and loop of transfer RNAs. The protein is tRNA pseudouridine synthase A of Escherichia coli (strain 55989 / EAEC).